Consider the following 510-residue polypeptide: Maturase K (510 aa).

This sequence belongs to the intron maturase 2 family. MatK subfamily.

It is found in the plastid. Its subcellular location is the chloroplast. Its function is as follows. Usually encoded in the trnK tRNA gene intron. Probably assists in splicing its own and other chloroplast group II introns. In Penstemon heterophyllus (Foothill penstemon), this protein is Maturase K.